The following is a 437-amino-acid chain: Adenylosuccinate synthetase (437 aa).

Residues 12–18 (GDEGKGK) and 40–42 (GHT) contribute to the GTP site. Aspartate 13 acts as the Proton acceptor in catalysis. The Mg(2+) site is built by aspartate 13 and glycine 40. IMP-binding positions include 13–16 (DEGK), 38–41 (NAGH), threonine 131, arginine 145, glutamine 225, and threonine 240. The active-site Proton donor is histidine 41. The tract at residues 281-304 (TELLGADGKPDADGERLGTRGHEF) is disordered. A compositionally biased stretch (basic and acidic residues) spans 288–303 (GKPDADGERLGTRGHE). 306–312 (TTTGRQR) lines the substrate pocket. Arginine 310 contacts IMP. GTP-binding positions include arginine 312, 338-340 (KLD), and 420-422 (STS).

Belongs to the adenylosuccinate synthetase family. As to quaternary structure, homodimer. Requires Mg(2+) as cofactor.

It is found in the cytoplasm. The enzyme catalyses IMP + L-aspartate + GTP = N(6)-(1,2-dicarboxyethyl)-AMP + GDP + phosphate + 2 H(+). The protein operates within purine metabolism; AMP biosynthesis via de novo pathway; AMP from IMP: step 1/2. In terms of biological role, plays an important role in the de novo pathway of purine nucleotide biosynthesis. Catalyzes the first committed step in the biosynthesis of AMP from IMP. In Ruegeria sp. (strain TM1040) (Silicibacter sp.), this protein is Adenylosuccinate synthetase.